A 101-amino-acid chain; its full sequence is Ascorbate-specific PTS system EIIB component (101 aa).

One can recognise a PTS EIIB type-2 domain in the interval 1-100 (MTVRILAVCG…VIKEHFPQDV (100 aa)). Cys-9 (phosphocysteine intermediate) is an active-site residue. A Phosphocysteine modification is found at Cys-9.

It localises to the cytoplasm. The catalysed reaction is N(pros)-phospho-L-histidyl-[protein] + L-ascorbate(out) = L-ascorbate 6-phosphate(in) + L-histidyl-[protein]. Functionally, the phosphoenolpyruvate-dependent sugar phosphotransferase system (sugar PTS), a major carbohydrate active transport system, catalyzes the phosphorylation of incoming sugar substrates concomitantly with their translocation across the cell membrane. The enzyme II UlaABC PTS system is involved in ascorbate transport. In Escherichia coli O157:H7, this protein is Ascorbate-specific PTS system EIIB component (ulaB).